The following is a 176-amino-acid chain: Ribosome rescue factor SmrB (176 aa).

The 76-residue stretch at 98–173 (LDLHGLTQMQ…GTAAILLLVE (76 aa)) folds into the Smr domain.

It belongs to the SmrB family. Associates with collided ribosomes, but not with correctly translating polysomes.

Its function is as follows. Acts as a ribosome collision sensor. Detects stalled/collided disomes (pairs of ribosomes where the leading ribosome is stalled and a second ribosome has collided with it) and endonucleolytically cleaves mRNA at the 5' boundary of the stalled ribosome. Stalled/collided disomes form a new interface (primarily via the 30S subunits) that binds SmrB. Cleaved mRNA becomes available for tmRNA ligation, leading to ribosomal subunit dissociation and rescue of stalled ribosomes. In Serratia proteamaculans (strain 568), this protein is Ribosome rescue factor SmrB.